The primary structure comprises 160 residues: Small ribosomal subunit protein uS7 (160 aa).

This sequence belongs to the universal ribosomal protein uS7 family. Part of the 30S ribosomal subunit. Contacts proteins S9 and S11.

In terms of biological role, one of the primary rRNA binding proteins, it binds directly to 16S rRNA where it nucleates assembly of the head domain of the 30S subunit. Is located at the subunit interface close to the decoding center, probably blocks exit of the E-site tRNA. The protein is Small ribosomal subunit protein uS7 of Hydrogenobaculum sp. (strain Y04AAS1).